A 314-amino-acid chain; its full sequence is Porphobilinogen deaminase (314 aa).

The residue at position 234 (Cys-234) is an S-(dipyrrolylmethanemethyl)cysteine.

This sequence belongs to the HMBS family. As to quaternary structure, monomer. Dipyrromethane serves as cofactor.

It catalyses the reaction 4 porphobilinogen + H2O = hydroxymethylbilane + 4 NH4(+). It functions in the pathway porphyrin-containing compound metabolism; protoporphyrin-IX biosynthesis; coproporphyrinogen-III from 5-aminolevulinate: step 2/4. Functionally, tetrapolymerization of the monopyrrole PBG into the hydroxymethylbilane pre-uroporphyrinogen in several discrete steps. This chain is Porphobilinogen deaminase, found in Mycobacterium marinum (strain ATCC BAA-535 / M).